The sequence spans 525 residues: MLEFSVIERGGYIPAVEKNKAFLRADGWNDYSFVTMFYLTVFDEHGEKCDIGNVKIGFVGQKEEVSTYSLIDKKFSQLPEMFFSLGESIDYYVNLSKLSDGFKHNLLKAIQDLVVWPNRLADIENESVLNTSLLRGVTLSEIHGQFARVLNGLPELSDFHFSFNRKSAPGFSDLTIPFEVTVNSMPSTNIHAFIGRNGCGKTTILNGMIGAITNPENNEYFFSENNRLIESRIPKGYFRSLVSVSFSAFDPFTPPKEQPDPAKGTQYFYIGLKNAASNSLKSLGDLRLEFISAFIGCMRVDRKRQLWLEAIKKLSSDENFSNMELISLISKYEELRRNEPQIQVDDDKFTKLFYDNIQKYLLRMSSGHAIVLFTITRLVDVVGEKSLVLFDEPEVHLHPPLLSAFLRTLSDLLDARNGVAIIATHSPVVLQEVPKSCMWKVLRSREAINIIRPDIETFGENLGVLTREVFLLEVTNSGYHHLLSQSVDSELSYETILKNYNGQIGLEGRTVLKAMIMNRDEGKVQ.

The sequence is that of Protein ea59 (ea59) from Escherichia coli (Bacteriophage lambda).